The following is a 199-amino-acid chain: Chaperone protein TorD (199 aa).

The protein belongs to the TorD/DmsD family. TorD subfamily.

It localises to the cytoplasm. Its function is as follows. Involved in the biogenesis of TorA. Acts on TorA before the insertion of the molybdenum cofactor and, as a result, probably favors a conformation of the apoenzyme that is competent for acquiring the cofactor. The chain is Chaperone protein TorD from Escherichia coli O157:H7 (strain EC4115 / EHEC).